We begin with the raw amino-acid sequence, 755 residues long: Protein MTSS 1 (755 aa).

One can recognise an IMD domain in the interval 1–250; the sequence is MEAVIEKECS…EQVILDLKGS (250 aa). Residues 108–155 are a coiled coil; sequence LQEQMEEWKKVANQLDKDHAKEYKKARQEIKKKSSDTLKLQKKAKKGR. Disordered stretches follow at residues 139–159 and 255–305; these read KKSS…GDIQ and SYQT…RSSN. T258 is subject to Phosphothreonine. Residues S261, S262, S271, and S322 each carry the phosphoserine modification. The tract at residues 327–351 is disordered; sequence QDAFQSKSPSPMPPEAPNQLSNGFS. T425 is modified (phosphothreonine). Disordered stretches follow at residues 428–470, 490–513, and 563–755; these read RRKE…TRPG, DTQR…TTPC, and QAKR…PRFS. The span at 443 to 453 shows a compositional bias: low complexity; it reads TTASGPPAAAE. T603 bears the Phosphothreonine mark. Residues 608 to 623 show a composition bias toward low complexity; it reads PIPIKTPVIPVKTPTV. Phosphoserine is present on residues S644 and S647. Residues 656 to 671 are compositionally biased toward polar residues; that stretch reads GVTSMPSSMWSGQASV. The region spanning 727–744 is the WH2 domain; sequence QGEDMLNAIRRGVKLKKT.

Belongs to the MTSS family. As to quaternary structure, binds to actin. Binds to the cytoplasmic domain of receptor protein tyrosine phosphatase delta. In terms of tissue distribution, expressed in many tissues, including spleen, thymus, prostate, testis, uterus, colon, and peripheral blood.

It is found in the cytoplasm. The protein localises to the cytoskeleton. In terms of biological role, may be related to cancer progression or tumor metastasis in a variety of organ sites, most likely through an interaction with the actin cytoskeleton. The chain is Protein MTSS 1 from Homo sapiens (Human).